Consider the following 598-residue polypeptide: Auxin response factor 22 (598 aa).

A DNA-binding region (TF-B3) is located at residues 124–226; it reads NSFTKVLTAS…ELRVGIRRAG (103 aa). The PB1 domain occupies 509–590; that stretch reads RTCTKVQMQG…MVKKILIFKR (82 aa).

It belongs to the ARF family. As to quaternary structure, homodimers and heterodimers.

The protein resides in the nucleus. Functionally, auxin response factors (ARFs) are transcriptional factors that bind specifically to the DNA sequence 5'-TGTCTC-3' found in the auxin-responsive promoter elements (AuxREs). Could act as transcriptional activator or repressor. Formation of heterodimers with Aux/IAA proteins may alter their ability to modulate early auxin response genes expression. This Arabidopsis thaliana (Mouse-ear cress) protein is Auxin response factor 22 (ARF22).